The chain runs to 931 residues: Protein phosphatase 1 regulatory subunit 37 homolog (931 aa).

Residues threonine 20–alanine 71 are disordered. Residues proline 41–serine 51 are compositionally biased toward polar residues. LRR repeat units lie at residues alanine 232 to alanine 259, serine 262 to cysteine 285, asparagine 290 to leucine 314, leucine 323 to arginine 346, lysine 351 to glutamate 374, asparagine 379 to asparagine 407, histidine 409 to glutamate 430, and asparagine 435 to serine 458. The span at glutamine 519–alanine 533 shows a compositional bias: basic and acidic residues. Disordered stretches follow at residues glutamine 519–arginine 602 and proline 780–arginine 807. Residues aspartate 534 to threonine 547 are compositionally biased toward acidic residues. Residues serine 554–serine 563 show a composition bias toward low complexity. 2 stretches are compositionally biased toward basic and acidic residues: residues proline 564 to proline 584 and threonine 790 to arginine 807.

This sequence belongs to the PPP1R37 family.

The sequence is that of Protein phosphatase 1 regulatory subunit 37 homolog from Caenorhabditis briggsae.